Reading from the N-terminus, the 394-residue chain is MSYSCCLPSLGCRTSCSSRPCVPPSCHGYTLPGACNIPANVSNCNWFCEGSFNGSEKETMQFLNDRLASYLEKVRQLERDNAELEKLIQERSQQQEPLLCPSYQSYFKTIEELQQKILCAKAENARLVVNIDNAKLASDDFRSKYQTEQSLRLLVESDINSIRRILDELTLCKSDLESQVESLREELICLKKNHEEEVNTLRSQLGDRLNVEVDTAPTVDLNQVLNETRSQYEALVEINRREVEQWFATQTEELNKQVVSSSEQLQSCQAEIIELRRTVNALEIELQAQHNLRDSLENTLTESEAHYSSQLSQVQSLITNVESQLAEIRCDLERQNQEYQVLLDVRARLECEINTYRSLLESEDCKLPCNPCATTNASGNSCGPCGTSQKGCCN.

Residues 1-56 (MSYSCCLPSLGCRTSCSSRPCVPPSCHGYTLPGACNIPANVSNCNWFCEGSFNGSE) form a head region. In terms of domain architecture, IF rod spans 56–367 (EKETMQFLND…SLLESEDCKL (312 aa)). Residues 57–91 (KETMQFLNDRLASYLEKVRQLERDNAELEKLIQER) form a coil 1A region. The linker 1 stretch occupies residues 92–102 (SQQQEPLLCPS). The interval 103–203 (YQSYFKTIEE…HEEEVNTLRS (101 aa)) is coil 1B. Residues 204 to 219 (QLGDRLNVEVDTAPTV) form a linker 12 region. A coil 2 region spans residues 220-363 (DLNQVLNETR…NTYRSLLESE (144 aa)). Positions 364 to 394 (DCKLPCNPCATTNASGNSCGPCGTSQKGCCN) are tail.

It belongs to the intermediate filament family. Expressed in the hair follicles.

The protein is Keratin, type I cuticular Ha4 (KRT34) of Homo sapiens (Human).